The chain runs to 315 residues: Nucleotide-binding protein PsycPRwf_2129 (315 aa).

29 to 36 (GRSGSGKT) contacts ATP. GTP is bound at residue 79–82 (DIRT).

This sequence belongs to the RapZ-like family.

Its function is as follows. Displays ATPase and GTPase activities. In Psychrobacter sp. (strain PRwf-1), this protein is Nucleotide-binding protein PsycPRwf_2129.